Here is a 404-residue protein sequence, read N- to C-terminus: Aspergillopepsin-1 (404 aa).

The N-terminal stretch at 1–20 (MVILSKVAAVAVGLSTVASA) is a signal peptide. Positions 21–77 (LPTGPSHSPHARRGFTINQITRQTARVGPKTASFPAIYSRALAKYGGTVPAHLKSAV) are cleaved as a propeptide — activation peptide. In terms of domain architecture, Peptidase A1 spans 95 to 401 (YLTPVNIGGT…DSQGPRLGFA (307 aa)). Residue aspartate 111 is part of the active site. Asparagine 140 carries an N-linked (GlcNAc...) asparagine glycan. Aspartate 293 is an active-site residue. A disulfide bridge links cysteine 329 with cysteine 364.

The protein belongs to the peptidase A1 family. In terms of assembly, monomer.

The protein localises to the secreted. It catalyses the reaction Hydrolysis of proteins with broad specificity. Generally favors hydrophobic residues in P1 and P1', but also accepts Lys in P1, which leads to activation of trypsinogen. Does not clot milk.. In terms of biological role, secreted aspartic endopeptidase that allows assimilation of proteinaceous substrates. The scissile peptide bond is attacked by a nucleophilic water molecule activated by two aspartic residues in the active site. Shows a broad primary substrate specificity. Favors hydrophobic residues at the P1 and P1' positions, but also accepts a lysine residue in the P1 position, leading to the activation of trypsinogen and chymotrypsinogen A. The chain is Aspergillopepsin-1 (pepA) from Aspergillus flavus (strain ATCC 200026 / FGSC A1120 / IAM 13836 / NRRL 3357 / JCM 12722 / SRRC 167).